Consider the following 773-residue polypeptide: Histone-lysine N-methyltransferase mes-2 (773 aa).

The segment covering 1–13 has biased composition (polar residues); it reads MSNSEPSTSTPSG. Positions 1 to 33 are disordered; that stretch reads MSNSEPSTSTPSGKTKKRGKKCETSMGKSKKSK. Residues 1–194 form an interaction with mes-6 region; it reads MSNSEPSTST…TPDQLRLTHM (194 aa). In terms of domain architecture, CXC spans 505-614; that stretch reads IREDDMRDSQ…SNIIKCRNFG (110 aa). The SET domain maps to 616–737; the sequence is TRMIQKRTYC…ISEELTFDYS (122 aa). The segment at 749 to 773 is disordered; the sequence is VQTKERSEKPSRPKSQKLSKPMTSE. Residues 750–759 are compositionally biased toward basic and acidic residues; sequence QTKERSEKPS.

It belongs to the class V-like SAM-binding methyltransferase superfamily. Histone-lysine methyltransferase family. EZ subfamily. Interacts directly with mes-6 via its N-terminal domain. Forms a heterotrimeric complex with mes-3 and mes-6. Does not interact with mes-4. In terms of tissue distribution, in adults, it is predominantly expressed in the germline, and weakly expressed in intestinal cells. Expressed in the hypoderm.

The protein localises to the nucleus. The catalysed reaction is L-lysyl(27)-[histone H3] + 3 S-adenosyl-L-methionine = N(6),N(6),N(6)-trimethyl-L-lysyl(27)-[histone H3] + 3 S-adenosyl-L-homocysteine + 3 H(+). Functionally, polycomb group (PcG) protein. Catalytic subunit of a the mes-2/mes-3/mes-6 complex, which methylates 'Lys-27' of histone H3, leading to transcriptional repression of the affected target genes. PcG proteins act by forming multiprotein complexes, which are required to maintain the transcriptionally repressive state of homeotic genes throughout development. In association with the nfya-1-NF-Y complex, may play a role in repressing the expression of the homeobox protein egl-5 in tissues such as the head. PcG proteins are not required to initiate repression, but to maintain it during later stages of development. The mes-2/mes-3/mes-6 complex may participate in the global inactivation of the X chromosomes in germline cells. This complex is required to exclude mes-4 from the inactivated X-chromosomes in germline cells. Required for small-RNA-induced H3K27 trimethylation. Involved in the negative regulation of lifespan in a germline-independent fashion. The sequence is that of Histone-lysine N-methyltransferase mes-2 from Caenorhabditis elegans.